The primary structure comprises 191 residues: Small ribosomal subunit protein uS4A (191 aa).

Phosphoserine occurs at positions 50 and 161. In terms of domain architecture, S4 RNA-binding spans 107–181 (RRLQTQVFKL…CKRKRLRSQE (75 aa)). Position 164 is a phosphotyrosine (tyrosine 164). The interval 166 to 191 (GGRPGRCKRKRLRSQEGGEGEEAEEE) is disordered. Residue serine 179 is modified to Phosphoserine.

The protein belongs to the universal ribosomal protein uS4 family. As to quaternary structure, component of the small ribosomal subunit (SSU). Mature yeast ribosomes consist of a small (40S) and a large (60S) subunit. The 40S small subunit contains 1 molecule of ribosomal RNA (18S rRNA) and at least 33 different proteins. The large 60S subunit contains 3 rRNA molecules (25S, 5.8S and 5S rRNA) and at least 46 different proteins. Interacts with snoRNA U3. uS11 interacts with MPP10. Component of the ribosomal small subunit (SSU) processome composed of at least 40 protein subunits and snoRNA U3.

It localises to the cytoplasm. In terms of biological role, component of the ribosome, a large ribonucleoprotein complex responsible for the synthesis of proteins in the cell. The small ribosomal subunit (SSU) binds messenger RNAs (mRNAs) and translates the encoded message by selecting cognate aminoacyl-transfer RNA (tRNA) molecules. The large subunit (LSU) contains the ribosomal catalytic site termed the peptidyl transferase center (PTC), which catalyzes the formation of peptide bonds, thereby polymerizing the amino acids delivered by tRNAs into a polypeptide chain. The nascent polypeptides leave the ribosome through a tunnel in the LSU and interact with protein factors that function in enzymatic processing, targeting, and the membrane insertion of nascent chains at the exit of the ribosomal tunnel. uS4 is involved in nucleolar processing of pre-18S ribosomal RNA and ribosome assembly. The chain is Small ribosomal subunit protein uS4A (rps901) from Schizosaccharomyces pombe (strain 972 / ATCC 24843) (Fission yeast).